The primary structure comprises 156 residues: 2-C-methyl-D-erythritol 2,4-cyclodiphosphate synthase (156 aa).

2 residues coordinate a divalent metal cation: Asp-9 and His-11. Residues Asp-9–His-11 and His-36–Ser-37 each bind 4-CDP-2-C-methyl-D-erythritol 2-phosphate. His-44 is a binding site for a divalent metal cation. Residue Asn-58 to Gly-60 coordinates 4-CDP-2-C-methyl-D-erythritol 2-phosphate.

Belongs to the IspF family. Homotrimer. It depends on a divalent metal cation as a cofactor.

The enzyme catalyses 4-CDP-2-C-methyl-D-erythritol 2-phosphate = 2-C-methyl-D-erythritol 2,4-cyclic diphosphate + CMP. It participates in isoprenoid biosynthesis; isopentenyl diphosphate biosynthesis via DXP pathway; isopentenyl diphosphate from 1-deoxy-D-xylulose 5-phosphate: step 4/6. In terms of biological role, involved in the biosynthesis of isopentenyl diphosphate (IPP) and dimethylallyl diphosphate (DMAPP), two major building blocks of isoprenoid compounds. Catalyzes the conversion of 4-diphosphocytidyl-2-C-methyl-D-erythritol 2-phosphate (CDP-ME2P) to 2-C-methyl-D-erythritol 2,4-cyclodiphosphate (ME-CPP) with a corresponding release of cytidine 5-monophosphate (CMP). The protein is 2-C-methyl-D-erythritol 2,4-cyclodiphosphate synthase of Kosmotoga olearia (strain ATCC BAA-1733 / DSM 21960 / TBF 19.5.1).